Consider the following 422-residue polypeptide: Protein FAM53B (422 aa).

6 positions are modified to phosphoserine: S119, S168, S170, S180, S213, and S269. Disordered stretches follow at residues 193–225 (GQPC…GRLD) and 243–269 (CPPS…RSRS). The span at 244–269 (PPSANSTPASTPELARRSSGLARSRS) shows a compositional bias: low complexity. The short motif at 282–285 (KRRR) is the Nuclear localization signal element. A phosphoserine mark is found at S335 and S344.

Belongs to the FAM53 family. In terms of assembly, interacts with CTNNB1.

It localises to the nucleus. Its function is as follows. Acts as a regulator of Wnt signaling pathway by regulating beta-catenin (CTNNB1) nuclear localization. The polypeptide is Protein FAM53B (Mus musculus (Mouse)).